The sequence spans 66 residues: ATP synthase protein 8 (66 aa).

The helical transmembrane segment at 8 to 24 (TWLMMIMSMFLALFIIF) threads the bilayer. K54 carries the N6-acetyllysine; alternate modification. Position 54 is an N6-succinyllysine; alternate (K54). Position 57 is an N6-acetyllysine (K57).

Belongs to the ATPase protein 8 family. F-type ATPases have 2 components, CF(1) - the catalytic core - and CF(0) - the membrane proton channel. Component of an ATP synthase complex composed of ATP5PB, ATP5MC1, ATP5F1E, ATP5PD, ATP5ME, ATP5PF, ATP5MF, MT-ATP6, MT-ATP8, ATP5F1A, ATP5F1B, ATP5F1D, ATP5F1C, ATP5PO, ATP5MG, ATP5MK and ATP5MJ. Interacts with PRICKLE3.

Its subcellular location is the mitochondrion membrane. In terms of biological role, mitochondrial membrane ATP synthase (F(1)F(0) ATP synthase or Complex V) produces ATP from ADP in the presence of a proton gradient across the membrane which is generated by electron transport complexes of the respiratory chain. F-type ATPases consist of two structural domains, F(1) - containing the extramembraneous catalytic core and F(0) - containing the membrane proton channel, linked together by a central stalk and a peripheral stalk. During catalysis, ATP synthesis in the catalytic domain of F(1) is coupled via a rotary mechanism of the central stalk subunits to proton translocation. Part of the complex F(0) domain. Minor subunit located with subunit a in the membrane. The chain is ATP synthase protein 8 (MT-ATP8) from Cervus elaphus hippelaphus (European red deer).